The following is a 344-amino-acid chain: Uroporphyrinogen decarboxylase (344 aa).

Substrate contacts are provided by residues 26–30 (RQAGR), D76, Y152, S207, and H323.

Belongs to the uroporphyrinogen decarboxylase family. Homodimer.

The protein resides in the cytoplasm. It catalyses the reaction uroporphyrinogen III + 4 H(+) = coproporphyrinogen III + 4 CO2. It functions in the pathway porphyrin-containing compound metabolism; protoporphyrin-IX biosynthesis; coproporphyrinogen-III from 5-aminolevulinate: step 4/4. Functionally, catalyzes the decarboxylation of four acetate groups of uroporphyrinogen-III to yield coproporphyrinogen-III. The chain is Uroporphyrinogen decarboxylase from Hyphomonas neptunium (strain ATCC 15444).